We begin with the raw amino-acid sequence, 406 residues long: Argininosuccinate synthase (406 aa).

ATP contacts are provided by residues 11–19 (AYSGGLDTS) and A38. Positions 91 and 96 each coordinate L-citrulline. G121 is an ATP binding site. L-aspartate is bound by residues T123, N127, and D128. N127 lines the L-citrulline pocket. Residues R131, S181, S190, E266, and Y278 each contribute to the L-citrulline site.

This sequence belongs to the argininosuccinate synthase family. Type 1 subfamily. As to quaternary structure, homotetramer.

The protein localises to the cytoplasm. The enzyme catalyses L-citrulline + L-aspartate + ATP = 2-(N(omega)-L-arginino)succinate + AMP + diphosphate + H(+). It functions in the pathway amino-acid biosynthesis; L-arginine biosynthesis; L-arginine from L-ornithine and carbamoyl phosphate: step 2/3. This is Argininosuccinate synthase from Campylobacter curvus (strain 525.92).